Consider the following 916-residue polypeptide: Protein translocase subunit SecA (916 aa).

ATP is bound by residues Gln-86, 104–108 (GEGKT), and Asp-494. Residues 859–916 (LEAPEKPAQLQYTAPSEGGGTQTRVETRSTGRSGNPAKAAEQDAAKDAAKRPAKKKRR) are disordered. Polar residues predominate over residues 880 to 891 (QTRVETRSTGRS). Basic and acidic residues predominate over residues 898–908 (AEQDAAKDAAK).

The protein belongs to the SecA family. Monomer and homodimer. Part of the essential Sec protein translocation apparatus which comprises SecA, SecYEG and auxiliary proteins SecDF. Other proteins may also be involved.

The protein resides in the cell membrane. It is found in the cytoplasm. It carries out the reaction ATP + H2O + cellular proteinSide 1 = ADP + phosphate + cellular proteinSide 2.. Part of the Sec protein translocase complex. Interacts with the SecYEG preprotein conducting channel. Has a central role in coupling the hydrolysis of ATP to the transfer of proteins into and across the cell membrane, serving as an ATP-driven molecular motor driving the stepwise translocation of polypeptide chains across the membrane. This Pseudarthrobacter chlorophenolicus (strain ATCC 700700 / DSM 12829 / CIP 107037 / JCM 12360 / KCTC 9906 / NCIMB 13794 / A6) (Arthrobacter chlorophenolicus) protein is Protein translocase subunit SecA.